A 957-amino-acid polypeptide reads, in one-letter code: MGLDNIVVKGARSHNLKNIDVTIPRDKLVVLTGLSGSGKSSLAFDTIYAEGQRRYVESLSAYARQFLGQMDKPDVDSIEGLSPAISIDQKTTSRNPRSTVGTVTEIFDYLRLLYARIGKPVCPKHGIEISSQTVQQMVDRILSYEERTKLQILAPLVSGRKGTHVKVLEDIKKQGFVRVRIDGEMREVAEEIELDKNKKHTIEVVIDRIVVKEGIETRLADSLETALQLADGRVVVDIIGKEELLFSQHHACPQCGFSIPELEPRMFSFNSPFGACPTCDGLGVKLEVDLELVIPDRSRTLSENAIAPWEPISSQYYPQMLEAVCNHYGIDMDTPVEQLPDHQLEKILYGSGHEKIFFRYENDLGQVRENEILFEGVIPNVKRRYHETSSDYIRDQLEAYMAQKACPTCKGHRLKKEALAVLIGGKHLGEVTKLSIKEAKTFFESLELSKKDFSIARLILKEINDRLGFLMNVGLDYLTLSRSAGTLSGGEAQRIRLATQIGSSLMGVLYILDEPSIGLHQRDNDRLISTLAHMRDLGNTLIVVEHDEDTMLAADYIIDIGPGAGVHGGQVTAAGSPEEIMNDAKSLTGQYLSGKKFIPIPSERRQPNGRSFTVKGASENNLKQVNVEFPLGVFIAVTGVSGSGKSTLINEIVHKALAQKLHRAKDKPGKHKEIVGIEHVDKVIDIDQSPIGRTPRSNPATYTGVFDDIRDVFAMTNEAKVRGYKKGRFSFNVKGGRCEACRGDGIIKIEMHFLPDVYVPCEVCHGKRYNRETLDITYKGKTIADVLDMTVEEALEFFTNIPRIKRKIQTLVDVGLGYIKLGQPATTLSGGEAQRVKLASQLHKRATGKTLYILDEPTTGLHVDDIDRLLKVLQRIVDNGDTVLVIEHNLDVIKTVDHIIDLGPEGGDKGGTIVAQGTPEEVVEVEGSYTGKYLRPILERDRKRMDSRIREHELQRS.

33 to 40 (GLSGSGKS) contributes to the ATP binding site. The segment at 252–279 (CPQCGFSIPELEPRMFSFNSPFGACPTC) adopts a C4-type zinc-finger fold. ABC transporter domains follow at residues 309-587 (WEPI…AKSL) and 607-935 (PNGR…KYLR). An ATP-binding site is contributed by 639–646 (GVSGSGKS). The C4-type zinc-finger motif lies at 738–764 (CEACRGDGIIKIEMHFLPDVYVPCEVC).

Belongs to the ABC transporter superfamily. UvrA family. In terms of assembly, forms a heterotetramer with UvrB during the search for lesions.

Its subcellular location is the cytoplasm. Functionally, the UvrABC repair system catalyzes the recognition and processing of DNA lesions. UvrA is an ATPase and a DNA-binding protein. A damage recognition complex composed of 2 UvrA and 2 UvrB subunits scans DNA for abnormalities. When the presence of a lesion has been verified by UvrB, the UvrA molecules dissociate. This chain is UvrABC system protein A, found in Halalkalibacterium halodurans (strain ATCC BAA-125 / DSM 18197 / FERM 7344 / JCM 9153 / C-125) (Bacillus halodurans).